Here is a 158-residue protein sequence, read N- to C-terminus: Transcription elongation factor GreA (158 aa).

This sequence belongs to the GreA/GreB family.

Necessary for efficient RNA polymerase transcription elongation past template-encoded arresting sites. The arresting sites in DNA have the property of trapping a certain fraction of elongating RNA polymerases that pass through, resulting in locked ternary complexes. Cleavage of the nascent transcript by cleavage factors such as GreA or GreB allows the resumption of elongation from the new 3'terminus. GreA releases sequences of 2 to 3 nucleotides. The protein is Transcription elongation factor GreA of Salmonella typhi.